Reading from the N-terminus, the 231-residue chain is Urease accessory protein UreE (231 aa).

Positions 185–231 (VASPLDEPHGSGLHIHGIHSHEEGHSHGDHDHDHSHSHGDHDHDHKH) are disordered. Basic and acidic residues predominate over residues 203–231 (HSHEEGHSHGDHDHDHSHSHGDHDHDHKH).

Belongs to the UreE family.

It localises to the cytoplasm. In terms of biological role, involved in urease metallocenter assembly. Binds nickel. Probably functions as a nickel donor during metallocenter assembly. In Yersinia pestis bv. Antiqua (strain Antiqua), this protein is Urease accessory protein UreE.